The primary structure comprises 230 residues: Demethylmenaquinone methyltransferase (230 aa).

S-adenosyl-L-methionine-binding positions include T62, D80, D100–A101, and S117.

It belongs to the class I-like SAM-binding methyltransferase superfamily. MenG/UbiE family.

It carries out the reaction a 2-demethylmenaquinol + S-adenosyl-L-methionine = a menaquinol + S-adenosyl-L-homocysteine + H(+). The protein operates within quinol/quinone metabolism; menaquinone biosynthesis; menaquinol from 1,4-dihydroxy-2-naphthoate: step 2/2. In terms of biological role, methyltransferase required for the conversion of demethylmenaquinol (DMKH2) to menaquinol (MKH2). The protein is Demethylmenaquinone methyltransferase of Mycolicibacterium paratuberculosis (strain ATCC BAA-968 / K-10) (Mycobacterium paratuberculosis).